We begin with the raw amino-acid sequence, 273 residues long: Urease accessory protein UreD (273 aa).

The protein belongs to the UreD family. UreD, UreF and UreG form a complex that acts as a GTP-hydrolysis-dependent molecular chaperone, activating the urease apoprotein by helping to assemble the nickel containing metallocenter of UreC. The UreE protein probably delivers the nickel.

Its subcellular location is the cytoplasm. Required for maturation of urease via the functional incorporation of the urease nickel metallocenter. This Bacillus cereus (strain ATCC 10987 / NRS 248) protein is Urease accessory protein UreD.